The sequence spans 496 residues: Nitric oxide synthase, inducible (496 aa).

Positions 6, 32, and 36 each coordinate FMN. An FAD-binding FR-type domain is found at 101–341; that stretch reads KNLFTMRLRS…VRSVSGFQLP (241 aa). Arg121 serves as a coordination point for NADP(+). FAD contacts are provided by His143, Arg277, Tyr279, Ser280, Thr295, and Ala297. Thr300 is a binding site for NADP(+). Residues Tyr301, Val314, Cys315, and Ser316 each contribute to the FAD site. NADP(+) is bound by residues Thr355, Arg388, Ser417, Arg418, Lys424, Tyr426, Gln428, and Asp461.

This sequence belongs to the NOS family. As to quaternary structure, homodimer. Interacts with NHERF1. Interacts with GAPDH; induced by oxidatively-modified low-densitity lipoprotein (LDL(ox)). Interacts with S100A8 and S100A9 to form the iNOS-S100A8/9 transnitrosylase complex. Interacts with SPSB1, SPSB2 and SPSB4. Interacts with ELOC and CUL5 in the presence of SPSB1 or SPSB2 or SPSB4. Forms a complex with ASL, ASS1 and HSP90AA1; the complex regulates cell-autonomous L-arginine synthesis and citrulline recycling while channeling extracellular L-arginine to nitric oxide synthesis pathway. The cofactor is heme b. It depends on FAD as a cofactor. FMN serves as cofactor. Requires (6R)-L-erythro-5,6,7,8-tetrahydrobiopterin as cofactor. Polyubiquitinated; mediated by SPSB1, SPSB2 and SPSB4, leading to proteasomal degradation.

Its subcellular location is the cytoplasm. It is found in the cytosol. The catalysed reaction is 2 L-arginine + 3 NADPH + 4 O2 + H(+) = 2 L-citrulline + 2 nitric oxide + 3 NADP(+) + 4 H2O. Its activity is regulated as follows. Not stimulated by calcium/calmodulin. Its function is as follows. Produces nitric oxide (NO) which is a messenger molecule with diverse functions throughout the body. In macrophages, NO mediates tumoricidal and bactericidal actions. Also has nitrosylase activity and mediates cysteine S-nitrosylation of cytoplasmic target proteins such PTGS2/COX2. As component of the iNOS-S100A8/9 transnitrosylase complex involved in the selective inflammatory stimulus-dependent S-nitrosylation of GAPDH implicated in regulation of the GAIT complex activity and probably multiple targets including ANXA5, EZR, MSN and VIM. Involved in inflammation, enhances the synthesis of pro-inflammatory mediators such as IL6 and IL8. The sequence is that of Nitric oxide synthase, inducible (NOS2) from Oryctolagus cuniculus (Rabbit).